A 346-amino-acid polypeptide reads, in one-letter code: Endo-1,4-beta-xylanase B (346 aa).

Positions 1 to 19 (MKGLPALLLLLIGCVSSFG) are cleaved as a signal peptide. Residues 41–338 (GNNFWSLPDA…KPCYFAIREL (298 aa)) enclose the GH10 domain. The Proton donor role is filled by glutamate 153. Glutamate 259 serves as the catalytic Nucleophile.

Belongs to the glycosyl hydrolase 10 (cellulase F) family.

It carries out the reaction Endohydrolysis of (1-&gt;4)-beta-D-xylosidic linkages in xylans.. This chain is Endo-1,4-beta-xylanase B (xynB), found in Thermotoga neapolitana.